Here is a 332-residue protein sequence, read N- to C-terminus: L-lactate dehydrogenase C chain (332 aa).

S2 bears the Blocked amino end (Ser) mark. NAD(+)-binding positions include G29–K57 and R99. Residues R106, N138, and R169 each coordinate substrate. N138 provides a ligand contact to NAD(+). H193 functions as the Proton acceptor in the catalytic mechanism. T248 provides a ligand contact to substrate.

The protein belongs to the LDH/MDH superfamily. LDH family. In terms of assembly, homotetramer. Interacts with RABL2/RABL2A; binds preferentially to GTP-bound RABL2. As to expression, expressed within the midpiece of sperm tail (at protein level).

The protein localises to the cytoplasm. The enzyme catalyses (S)-lactate + NAD(+) = pyruvate + NADH + H(+). It participates in fermentation; pyruvate fermentation to lactate; (S)-lactate from pyruvate: step 1/1. Possible role in sperm motility. This chain is L-lactate dehydrogenase C chain (Ldhc), found in Mus musculus (Mouse).